The chain runs to 233 residues: Biosynthetic peptidoglycan transglycosylase (233 aa).

A helical membrane pass occupies residues 7-27; the sequence is VFTWLAKLVLGLFFASILSVV.

It belongs to the glycosyltransferase 51 family.

The protein localises to the cell inner membrane. The enzyme catalyses [GlcNAc-(1-&gt;4)-Mur2Ac(oyl-L-Ala-gamma-D-Glu-L-Lys-D-Ala-D-Ala)](n)-di-trans,octa-cis-undecaprenyl diphosphate + beta-D-GlcNAc-(1-&gt;4)-Mur2Ac(oyl-L-Ala-gamma-D-Glu-L-Lys-D-Ala-D-Ala)-di-trans,octa-cis-undecaprenyl diphosphate = [GlcNAc-(1-&gt;4)-Mur2Ac(oyl-L-Ala-gamma-D-Glu-L-Lys-D-Ala-D-Ala)](n+1)-di-trans,octa-cis-undecaprenyl diphosphate + di-trans,octa-cis-undecaprenyl diphosphate + H(+). It functions in the pathway cell wall biogenesis; peptidoglycan biosynthesis. In terms of biological role, peptidoglycan polymerase that catalyzes glycan chain elongation from lipid-linked precursors. The polypeptide is Biosynthetic peptidoglycan transglycosylase (Shewanella oneidensis (strain ATCC 700550 / JCM 31522 / CIP 106686 / LMG 19005 / NCIMB 14063 / MR-1)).